A 227-amino-acid chain; its full sequence is Enolase-phosphatase E1 (227 aa).

It belongs to the HAD-like hydrolase superfamily. MasA/MtnC family. In terms of assembly, monomer. It depends on Mg(2+) as a cofactor.

The enzyme catalyses 5-methylsulfanyl-2,3-dioxopentyl phosphate + H2O = 1,2-dihydroxy-5-(methylsulfanyl)pent-1-en-3-one + phosphate. The protein operates within amino-acid biosynthesis; L-methionine biosynthesis via salvage pathway; L-methionine from S-methyl-5-thio-alpha-D-ribose 1-phosphate: step 3/6. It functions in the pathway amino-acid biosynthesis; L-methionine biosynthesis via salvage pathway; L-methionine from S-methyl-5-thio-alpha-D-ribose 1-phosphate: step 4/6. Functionally, bifunctional enzyme that catalyzes the enolization of 2,3-diketo-5-methylthiopentyl-1-phosphate (DK-MTP-1-P) into the intermediate 2-hydroxy-3-keto-5-methylthiopentenyl-1-phosphate (HK-MTPenyl-1-P), which is then dephosphorylated to form the acireductone 1,2-dihydroxy-3-keto-5-methylthiopentene (DHK-MTPene). This is Enolase-phosphatase E1 from Azotobacter vinelandii (strain DJ / ATCC BAA-1303).